The primary structure comprises 125 residues: Methylglyoxal synthase (125 aa).

Residues 1 to 125 enclose the MGS-like domain; that stretch reads MTQRLRIALI…TAEKLVRALD (125 aa). Residues histidine 12, lysine 16, 38–41, and 59–60 each bind substrate; these read TGTT and SG. The active-site Proton donor/acceptor is the aspartate 65. Residue histidine 92 coordinates substrate.

This sequence belongs to the methylglyoxal synthase family.

It carries out the reaction dihydroxyacetone phosphate = methylglyoxal + phosphate. In terms of biological role, catalyzes the formation of methylglyoxal from dihydroxyacetone phosphate. The protein is Methylglyoxal synthase of Brucella abortus (strain S19).